A 256-amino-acid chain; its full sequence is Deoxyribose-phosphate aldolase (256 aa).

Aspartate 102 functions as the Proton donor/acceptor in the catalytic mechanism. Lysine 165 functions as the Schiff-base intermediate with acetaldehyde in the catalytic mechanism. The Proton donor/acceptor role is filled by lysine 197.

The protein belongs to the DeoC/FbaB aldolase family. DeoC type 2 subfamily.

The protein resides in the cytoplasm. It carries out the reaction 2-deoxy-D-ribose 5-phosphate = D-glyceraldehyde 3-phosphate + acetaldehyde. The protein operates within carbohydrate degradation; 2-deoxy-D-ribose 1-phosphate degradation; D-glyceraldehyde 3-phosphate and acetaldehyde from 2-deoxy-alpha-D-ribose 1-phosphate: step 2/2. Functionally, catalyzes a reversible aldol reaction between acetaldehyde and D-glyceraldehyde 3-phosphate to generate 2-deoxy-D-ribose 5-phosphate. In Shewanella sp. (strain W3-18-1), this protein is Deoxyribose-phosphate aldolase.